The chain runs to 548 residues: Sesquiterpene synthase 12 (548 aa).

Residues Asp299, Asp303, Asp444, and Glu452 each coordinate Mg(2+). Residues 299–303 (DDTFD) carry the DDXXD motif motif.

Belongs to the terpene synthase family. Tpsa subfamily. The cofactor is Mg(2+). Mn(2+) is required as a cofactor. Mostly expressed in leaves, to a lower extent in stems, trichomes, flowers and roots and, at low levels, in fruits.

The catalysed reaction is (2E,6E)-farnesyl diphosphate = alpha-humulene + diphosphate. The enzyme catalyses (2E,6E)-farnesyl diphosphate = (-)-(E)-beta-caryophyllene + diphosphate. It catalyses the reaction (2Z,6Z)-farnesyl diphosphate = beta-bisabolene + diphosphate. It carries out the reaction (2E)-geranyl diphosphate = terpinolene + diphosphate. The catalysed reaction is (2E)-geranyl diphosphate = limonene + diphosphate. The enzyme catalyses (2E)-geranyl diphosphate = beta-myrcene + diphosphate. It catalyses the reaction (2E)-geranyl diphosphate = (E)-beta-ocimene + diphosphate. It carries out the reaction (2Z,6Z)-farnesyl diphosphate = gamma-curcumene + diphosphate. The catalysed reaction is (2Z,6Z)-farnesyl diphosphate = (Z)-gamma-bisabolene + diphosphate. Its pathway is secondary metabolite biosynthesis; terpenoid biosynthesis. Its function is as follows. Sesquiterpene synthase involved in the biosynthesis of volatile compounds. Mediates the conversion of (2E,6E)-farnesyl diphosphate (FPP) into (1E,4E,8E)-alpha-humulene and (-)-(E)-beta-caryophyllene, and of (2Z,6Z)-farnesyl diphosphate ((ZZ)-FPP) into beta-bisabolene, gamma-curcumene and (Z)-gamma-bisabolene. Can act with a low efficiency as a monoterpene synthase with geranyl diphosphate (GPP) as substrate, thus producing beta-myrcene, (E)-beta-ocimene, limonene and terpinolene. The polypeptide is Sesquiterpene synthase 12 (Solanum lycopersicum (Tomato)).